The sequence spans 281 residues: Octanoyl-[GcvH]:protein N-octanoyltransferase (281 aa).

Residues G44–T250 enclose the BPL/LPL catalytic domain. C149 acts as the Acyl-thioester intermediate in catalysis.

It belongs to the octanoyltransferase LipL family.

It carries out the reaction N(6)-octanoyl-L-lysyl-[glycine-cleavage complex H protein] + L-lysyl-[lipoyl-carrier protein] = N(6)-octanoyl-L-lysyl-[lipoyl-carrier protein] + L-lysyl-[glycine-cleavage complex H protein]. The protein operates within protein modification; protein lipoylation via endogenous pathway; protein N(6)-(lipoyl)lysine from octanoyl-[acyl-carrier-protein]. In terms of biological role, catalyzes the amidotransfer (transamidation) of the octanoyl moiety from octanoyl-GcvH to the lipoyl domain of the E2 subunit of lipoate-dependent enzymes. This chain is Octanoyl-[GcvH]:protein N-octanoyltransferase, found in Bacillus anthracis.